Consider the following 492-residue polypeptide: MTFRGDTAVVVLAAGAGTRMRSDTPKVLHTLAGRSMLSHSLHAMAKLAPQHLVVVLGHCHERISPLVDELAESLGRTINVTLQDRPLGTGDAVRCGLSALPADYSGIVVVTAGDTPLLDAETVADLIETHSATSSAVTVLTTTLSDPHGYGRILRTQDNAVMAIVEQTDATPSQREIREVNAGVYAFEITALQSALSRLSSDNAQQELYLPDVIAILRRDGQTVSARHIDDSALVAGVNDRVQLAQLGAELNRRIVAAHQMAGVTVIDPATTWIDVDAAIGRDTVIQPGTQLLGHTQIGDRCEIGPDTTLTDVTVGDNASVVRTHGSSSSIGAAAAVGPFTYLRPGTVLGTGGKLGAFVETKNSTIGAGTKVPHLTYVGDADIGDDSNIGAGSVFVNYDGMTKNRATIGSHVRSGAGTRFVAPVNVGDGAYTGAGTVIRDDVPPGALAVSGGPQRNIEDWVQQKRPGTPSAEAARKASAEQSTPPPDADHPP.

The pyrophosphorylase stretch occupies residues 1–241 (MTFRGDTAVV…SALVAGVNDR (241 aa)). Residues 12–15 (LAAG), Lys26, Gln83, and 88–89 (GT) each bind UDP-N-acetyl-alpha-D-glucosamine. Asp114 lines the Mg(2+) pocket. Positions 151, 166, 181, and 239 each coordinate UDP-N-acetyl-alpha-D-glucosamine. Position 239 (Asn239) interacts with Mg(2+). The tract at residues 242–262 (VQLAQLGAELNRRIVAAHQMA) is linker. The segment at 263–492 (GVTVIDPATT…TPPPDADHPP (230 aa)) is N-acetyltransferase. Arg344 and Lys362 together coordinate UDP-N-acetyl-alpha-D-glucosamine. Catalysis depends on His374, which acts as the Proton acceptor. Tyr377 and Asn388 together coordinate UDP-N-acetyl-alpha-D-glucosamine. Residues Ala391, 397–398 (NY), and Ala434 contribute to the acetyl-CoA site. The interval 443-492 (PPGALAVSGGPQRNIEDWVQQKRPGTPSAEAARKASAEQSTPPPDADHPP) is disordered.

The protein in the N-terminal section; belongs to the N-acetylglucosamine-1-phosphate uridyltransferase family. It in the C-terminal section; belongs to the transferase hexapeptide repeat family. In terms of assembly, homotrimer. Requires Mg(2+) as cofactor.

It localises to the cytoplasm. It catalyses the reaction alpha-D-glucosamine 1-phosphate + acetyl-CoA = N-acetyl-alpha-D-glucosamine 1-phosphate + CoA + H(+). The catalysed reaction is N-acetyl-alpha-D-glucosamine 1-phosphate + UTP + H(+) = UDP-N-acetyl-alpha-D-glucosamine + diphosphate. The protein operates within nucleotide-sugar biosynthesis; UDP-N-acetyl-alpha-D-glucosamine biosynthesis; N-acetyl-alpha-D-glucosamine 1-phosphate from alpha-D-glucosamine 6-phosphate (route II): step 2/2. Its pathway is nucleotide-sugar biosynthesis; UDP-N-acetyl-alpha-D-glucosamine biosynthesis; UDP-N-acetyl-alpha-D-glucosamine from N-acetyl-alpha-D-glucosamine 1-phosphate: step 1/1. It functions in the pathway bacterial outer membrane biogenesis; LPS lipid A biosynthesis. Catalyzes the last two sequential reactions in the de novo biosynthetic pathway for UDP-N-acetylglucosamine (UDP-GlcNAc). The C-terminal domain catalyzes the transfer of acetyl group from acetyl coenzyme A to glucosamine-1-phosphate (GlcN-1-P) to produce N-acetylglucosamine-1-phosphate (GlcNAc-1-P), which is converted into UDP-GlcNAc by the transfer of uridine 5-monophosphate (from uridine 5-triphosphate), a reaction catalyzed by the N-terminal domain. This is Bifunctional protein GlmU from Mycobacterium ulcerans (strain Agy99).